The primary structure comprises 179 residues: Shikimate kinase (179 aa).

22–27 is a binding site for ATP; it reads GTGKSS. Residue serine 26 coordinates Mg(2+). Residues aspartate 44, arginine 68, and glycine 90 each contribute to the substrate site. Residue arginine 128 participates in ATP binding. Arginine 147 is a substrate binding site.

It belongs to the shikimate kinase family. In terms of assembly, monomer. The cofactor is Mg(2+).

Its subcellular location is the cytoplasm. The catalysed reaction is shikimate + ATP = 3-phosphoshikimate + ADP + H(+). The protein operates within metabolic intermediate biosynthesis; chorismate biosynthesis; chorismate from D-erythrose 4-phosphate and phosphoenolpyruvate: step 5/7. Functionally, catalyzes the specific phosphorylation of the 3-hydroxyl group of shikimic acid using ATP as a cosubstrate. This chain is Shikimate kinase, found in Geobacter metallireducens (strain ATCC 53774 / DSM 7210 / GS-15).